The following is a 268-amino-acid chain: Methionine aminopeptidase (268 aa).

A substrate-binding site is contributed by His-79. Residues Asp-97, Asp-108, and His-172 each coordinate a divalent metal cation. His-179 is a substrate binding site. A divalent metal cation-binding residues include Glu-205 and Glu-236.

Belongs to the peptidase M24A family. Methionine aminopeptidase type 1 subfamily. Monomer. It depends on Co(2+) as a cofactor. Zn(2+) is required as a cofactor. Requires Mn(2+) as cofactor. The cofactor is Fe(2+).

It catalyses the reaction Release of N-terminal amino acids, preferentially methionine, from peptides and arylamides.. In terms of biological role, removes the N-terminal methionine from nascent proteins. The N-terminal methionine is often cleaved when the second residue in the primary sequence is small and uncharged (Met-Ala-, Cys, Gly, Pro, Ser, Thr, or Val). Requires deformylation of the N(alpha)-formylated initiator methionine before it can be hydrolyzed. This chain is Methionine aminopeptidase, found in Haemophilus influenzae (strain ATCC 51907 / DSM 11121 / KW20 / Rd).